The chain runs to 155 residues: UPF0260 protein Smed_0627 (155 aa).

It belongs to the UPF0260 family.

This Sinorhizobium medicae (strain WSM419) (Ensifer medicae) protein is UPF0260 protein Smed_0627.